The following is a 270-amino-acid chain: dTDP-6-deoxy-L-talose 4-dehydrogenase (NAD(+)) (270 aa).

NAD(+)-binding positions include 11–12 (YI), 50–51 (DI), 72–76 (LAWQA), N87, T112, Y135, and K139. Substrate contacts are provided by T112 and Y135. Y135 functions as the Proton acceptor in the catalytic mechanism.

The protein belongs to the NAD(P)-dependent epimerase/dehydratase family.

It carries out the reaction dTDP-6-deoxy-beta-L-talose + NAD(+) = dTDP-4-dehydro-beta-L-rhamnose + NADH + H(+). The protein operates within bacterial outer membrane biogenesis; LPS O-antigen biosynthesis. Catalyzes the reduction of dTDP-6-deoxy-L-lyxo-4-hexulose to dTDP-6-deoxy-L-talose. This is dTDP-6-deoxy-L-talose 4-dehydrogenase (NAD(+)) (tll) from Aggregatibacter actinomycetemcomitans (Actinobacillus actinomycetemcomitans).